A 1107-amino-acid chain; its full sequence is Phospholipid-transporting ATPase 2 (1107 aa).

At 1 to 33 (MKRFVYINDDEASKELCCDNRISNRKYTLWNFL) the chain is on the cytoplasmic side. Residues 34–55 (PKNLWEQFSRFMNQYFLLIACL) traverse the membrane as a helical segment. The Extracellular portion of the chain corresponds to 56–60 (QLWSL). A helical membrane pass occupies residues 61 to 83 (ITPVNPASTWGPLIFIFAVSASK). Topologically, residues 84-268 (EAWDDYHRYL…TAMDAMIDKL (185 aa)) are cytoplasmic. Residues 269-290 (TGAIFVFQIVVVLVLGIAGNVW) traverse the membrane as a helical segment. The Extracellular segment spans residues 291 to 315 (KDTEARKQWYVQYPEEAPWYELLVI). The chain crosses the membrane as a helical span at residues 316-333 (PLRFELLCSIMIPISIKV). Residues 334 to 807 (SLDLVKGLYA…HGRYSYNRTA (474 aa)) lie on the Cytoplasmic side of the membrane. Aspartate 381 functions as the 4-aspartylphosphate intermediate in the catalytic mechanism. 2 residues coordinate Mg(2+): aspartate 752 and aspartate 756. A helical membrane pass occupies residues 808–827 (FLSQYSFYKSLLICFIQIFF). Topologically, residues 828–841 (SFISGVSGTSLFNS) are extracellular. A helical transmembrane segment spans residues 842 to 860 (VSLMAYNVFYTSVPVLVSV). Residues 861–890 (IDKDLSEASVMQHPQILFYCQAGRLLNPST) lie on the Cytoplasmic side of the membrane. Residues 891–912 (FAGWFGRSLFHAIIVFVITIHA) form a helical membrane-spanning segment. Residues 913–919 (YAYEKSE) lie on the Extracellular side of the membrane. The helical transmembrane segment at 920–942 (MEELGMVALSGCIWLQAFVVAQE) threads the bilayer. Over 943–948 (TNSFTV) the chain is Cytoplasmic. A helical membrane pass occupies residues 949–969 (LQHLSIWGNLVGFYAINFLFS). Over 970 to 982 (AIPSSGMYTIMFR) the chain is Extracellular. The helical transmembrane segment at 983 to 1007 (LCSQPSYWITMFLIVGAGMGPIFAL) threads the bilayer. Topologically, residues 1008–1107 (KYFRYTYRPS…SGYTRNCKDN (100 aa)) are cytoplasmic. Residues 1048–1075 (DLSPISITQPKNRSPVYEPLLSDSPNAT) form a disordered region. Serine 1050 is modified (phosphoserine).

It belongs to the cation transport ATPase (P-type) (TC 3.A.3) family. Type IV subfamily. Interacts with ALIS1, ALIS3 and ALIS5 in a heterologous system.

The protein resides in the endoplasmic reticulum membrane. Its subcellular location is the prevacuolar compartment membrane. The enzyme catalyses ATP + H2O + phospholipidSide 1 = ADP + phosphate + phospholipidSide 2.. Functionally, involved in transport of phospholipids. Contributes to transmembrane flipping of lipids. Requires an interaction with a protein of the ALIS family for activity. Specific for phosphatidylserine and has no activity with lysolipid, phosphatidylcholine or phosphatidylethanolamine. The protein is Phospholipid-transporting ATPase 2 of Arabidopsis thaliana (Mouse-ear cress).